A 617-amino-acid chain; its full sequence is Chaperone protein HscA homolog (617 aa).

The interval 1–23 (MALLQIAEPGQSSAPHEHKRAAG) is disordered.

It belongs to the heat shock protein 70 family.

Its function is as follows. Chaperone involved in the maturation of iron-sulfur cluster-containing proteins. Has a low intrinsic ATPase activity which is markedly stimulated by HscB. In Vibrio vulnificus (strain YJ016), this protein is Chaperone protein HscA homolog.